The following is a 436-amino-acid chain: Aminopeptidase C (436 aa).

Catalysis depends on residues Cys68, His356, and Asn378.

Belongs to the peptidase C1 family. Homohexamer.

The catalysed reaction is Inactivates bleomycin B2 (a cytotoxic glycometallopeptide) by hydrolysis of a carboxyamide bond of beta-aminoalanine, but also shows general aminopeptidase activity. The specificity varies somewhat with source, but amino acid arylamides of Met, Leu and Ala are preferred.. In terms of biological role, hydrolyzes naphthylamide-substituted amino acids as well as di- and tripeptides in which the half-cystine residue is involved in a disulfide loop, notably in oxytocin and vasopressin. Also has a bleomycin hydrolase activity. This chain is Aminopeptidase C (pepC), found in Lactococcus lactis subsp. cremoris (Streptococcus cremoris).